The chain runs to 84 residues: Cytochrome b559 subunit alpha (84 aa).

The chain crosses the membrane as a helical span at residues 24–38; the sequence is IIHAVTLPAIFIAGF. His26 is a binding site for heme.

This sequence belongs to the PsbE/PsbF family. As to quaternary structure, heterodimer of an alpha subunit and a beta subunit. PSII is composed of 1 copy each of membrane proteins PsbA, PsbB, PsbC, PsbD, PsbE, PsbF, PsbH, PsbI, PsbJ, PsbK, PsbL, PsbM, PsbT, PsbX, PsbY, Psb30/Ycf12, peripheral proteins PsbO, CyanoQ (PsbQ), PsbU, PsbV and a large number of cofactors. It forms dimeric complexes. The cofactor is heme b.

It is found in the cellular thylakoid membrane. In terms of biological role, this b-type cytochrome is tightly associated with the reaction center of photosystem II (PSII). PSII is a light-driven water:plastoquinone oxidoreductase that uses light energy to abstract electrons from H(2)O, generating O(2) and a proton gradient subsequently used for ATP formation. It consists of a core antenna complex that captures photons, and an electron transfer chain that converts photonic excitation into a charge separation. The protein is Cytochrome b559 subunit alpha of Prochlorococcus marinus subsp. pastoris (strain CCMP1986 / NIES-2087 / MED4).